A 469-amino-acid chain; its full sequence is Pancreatic lipase-related protein 2 (469 aa).

The N-terminal stretch at 1–17 (MLPSWTIGLLLLATVRG) is a signal peptide. Cysteines 21 and 27 form a disulfide. Asparagine 71 is a glycosylation site (N-linked (GlcNAc...) asparagine). A required for galactolipase activity region spans residues 93–105 (IHGFIDDGDSGWP). Cysteines 109 and 120 form a disulfide. Residue serine 171 is the Nucleophile of the active site. Residue aspartate 195 is the Charge relay system of the active site. The Ca(2+) site is built by glutamate 206, arginine 209, aspartate 211, and aspartate 214. The cysteines at positions 256 and 280 are disulfide-linked. Residues 257–279 (QKNILSTIIDINGIWQGIQDFVA) are required for galactolipase activity. Histidine 282 acts as the Charge relay system in catalysis. Intrachain disulfides connect cysteine 304-cysteine 315 and cysteine 318-cysteine 323. 3 N-linked (GlcNAc...) asparagine glycosylation sites follow: asparagine 353, asparagine 399, and asparagine 455. Residues 357-469 (WRYRVSVTLA…ENALQTLYPC (113 aa)) enclose the PLAT domain. Cysteine 453 and cysteine 469 are joined by a disulfide.

The protein belongs to the AB hydrolase superfamily. Lipase family.

It localises to the secreted. The protein localises to the zymogen granule membrane. The protein resides in the cell projection. It is found in the neuron projection. It catalyses the reaction a triacylglycerol + H2O = a diacylglycerol + a fatty acid + H(+). It carries out the reaction a 1,2-diacyl-3-O-(beta-D-galactosyl)-sn-glycerol + 2 H2O = 3-beta-D-galactosyl-sn-glycerol + 2 a fatty acid + 2 H(+). The catalysed reaction is 1,2,3-tri-(9Z-octadecenoyl)-glycerol + H2O = di-(9Z)-octadecenoylglycerol + (9Z)-octadecenoate + H(+). The enzyme catalyses di-(9Z)-octadecenoylglycerol + H2O = (9Z-octadecenoyl)-glycerol + (9Z)-octadecenoate + H(+). It catalyses the reaction (9Z-octadecenoyl)-glycerol + H2O = glycerol + (9Z)-octadecenoate + H(+). It carries out the reaction 1-(9Z-octadecenoyl)-glycerol + H2O = glycerol + (9Z)-octadecenoate + H(+). The catalysed reaction is 1,2,3-tripropanoylglycerol + H2O = dipropanoylglycerol + propanoate + H(+). The enzyme catalyses 1,2,3-tributanoylglycerol + H2O = dibutanoylglycerol + butanoate + H(+). It catalyses the reaction 1,2,3-trioctanoylglycerol + H2O = dioctanoylglycerol + octanoate + H(+). It carries out the reaction 1,2-didecanoylglycerol + H2O = decanoylglycerol + decanoate + H(+). The catalysed reaction is long chain 1,2-diacyl-3-O-beta-D-galactosyl-sn-glycerol + H2O = long chain acyl-3-O-beta-D-galactosyl-sn-glycerol + a fatty acid + H(+). The enzyme catalyses 1,2-dioctanoyl-3-O-beta-D-galactosyl-sn-glycerol + H2O = octanoyl-3-(beta-D-galactosyl)-sn-glycerol + octanoate + H(+). It catalyses the reaction 1,2-didodecanoyl-3-beta-D-galactosyl-sn-glycerol + H2O = dodecanoyl-3-beta-D-galactosyl-sn-glycerol + dodecanoate + H(+). It carries out the reaction 1-beta-D-galactosyl-2,3-didodecanoyl-sn-glycerol + H2O = 1-beta-D-galactosyl-dodecanoyl-sn-glycerol + dodecanoate + H(+). The catalysed reaction is a 1,2-diacyl-3-O-[alpha-D-galactosyl-(1-&gt;6)-beta-D-galactosyl]-sn-glycerol + H2O = acyl-3-O-[alpha-D-galactosyl-(1-&gt;6)-beta-D-galactosyl]-sn-glycerol + a fatty acid + H(+). The enzyme catalyses long chain 1,2-diacyl-3-O-[alpha-D-galactosyl-(1-&gt;6)-beta-D-galactosyl]-sn-glycerol + H2O = long chain acyl-3-O-[alpha-D-galactosyl-(1-&gt;6)-beta-D-galactosyl]-sn-glycerol + a fatty acid + H(+). It catalyses the reaction 1,2-dioctanoyl-3-O-[alpha-D-galactosyl-(1-&gt;6)-beta-D-galactosyl]-sn-glycerol + H2O = octanoyl-3-O-[alpha-D-galactosyl-(1-&gt;6)-beta-D-galactosyl]-sn-glycerol + octanoate + H(+). It carries out the reaction 1,2-didodecanoyl-3-O-[alpha-D-galactosyl-(1-&gt;6)-beta-D-galactosyl]-sn-glycerol + H2O = dodecanoyl-3-O-[alpha-D-galactosyl-(1-&gt;6)-beta-D-galactosyl]-sn-glycerol + dodecanoate + H(+). The catalysed reaction is a 1,2-diacyl-sn-glycero-3-phosphocholine + H2O = a monoacyl-sn-glycero-3-phosphocholine + a fatty acid + H(+). It functions in the pathway glycerolipid metabolism; triacylglycerol degradation. It participates in glycolipid metabolism. Functionally, lipase that primarily hydrolyzes triglycerides and galactosylglycerides. In neonates, may play a major role in pancreatic digestion of dietary fats such as milk fat globules enriched in long-chain triglycerides. Hydrolyzes short-, medium- and long-chain fatty acyls in triglycerides without apparent positional specificity. Can completely deacylate triacylglycerols. When the liver matures and bile salt synthesis increases, likely functions mainly as a galactolipase and monoacylglycerol lipase. Hydrolyzes monogalactosyldiglycerols (MGDG) and digalactosyldiacylglycerols (DGDG) present in a plant-based diet, releasing long-chain polyunsaturated fatty acids. Hydrolyzes medium- and long-chain fatty acyls in galactolipids. May act together with LIPF to hydrolyze partially digested triglycerides. Hydrolyzes long-chain monoglycerides with high efficiency. In cytotoxic T cells, contributes to perforin-dependent cell lysis, but is unlikely to mediate direct cytotoxicity. Also has low phospholipase activity. In neurons, required for the localization of the phospholipid 1-oleoyl-2-palmitoyl-PC (OPPC) to neurite tips through acyl chain remodeling of membrane phospholipids. The resulting OPPC-rich lipid membrane domain recruits the t-SNARE protein STX4 by selectively interacting with the STX4 transmembrane domain and this promotes surface expression of the dopamine transporter SLC6A3/DAT at neurite tips by facilitating fusion of SLC6A3-containing transport vesicles with the plasma membrane. This Bos taurus (Bovine) protein is Pancreatic lipase-related protein 2.